Here is a 301-residue protein sequence, read N- to C-terminus: Ornithine carbamoyltransferase (301 aa).

Carbamoyl phosphate contacts are provided by residues 46–49, Q73, R97, and 124–127; these read STRT and HPCQ. Residues N154, D218, and 222 to 223 contribute to the L-ornithine site; that span reads SM. Carbamoyl phosphate is bound by residues 258-259 and R286; that span reads CL.

Belongs to the aspartate/ornithine carbamoyltransferase superfamily. OTCase family.

It is found in the cytoplasm. The enzyme catalyses carbamoyl phosphate + L-ornithine = L-citrulline + phosphate + H(+). The protein operates within amino-acid biosynthesis; L-arginine biosynthesis; L-arginine from L-ornithine and carbamoyl phosphate: step 1/3. Its function is as follows. Reversibly catalyzes the transfer of the carbamoyl group from carbamoyl phosphate (CP) to the N(epsilon) atom of ornithine (ORN) to produce L-citrulline. The sequence is that of Ornithine carbamoyltransferase (argF) from Methanothermobacter thermautotrophicus (strain ATCC 29096 / DSM 1053 / JCM 10044 / NBRC 100330 / Delta H) (Methanobacterium thermoautotrophicum).